Consider the following 411-residue polypeptide: Phosphopentomutase (411 aa).

Residues Asp14, Asp306, His311, Asp347, His348, and His359 each contribute to the Mn(2+) site.

It belongs to the phosphopentomutase family. The cofactor is Mn(2+).

The protein localises to the cytoplasm. It catalyses the reaction 2-deoxy-alpha-D-ribose 1-phosphate = 2-deoxy-D-ribose 5-phosphate. It carries out the reaction alpha-D-ribose 1-phosphate = D-ribose 5-phosphate. Its pathway is carbohydrate degradation; 2-deoxy-D-ribose 1-phosphate degradation; D-glyceraldehyde 3-phosphate and acetaldehyde from 2-deoxy-alpha-D-ribose 1-phosphate: step 1/2. Its function is as follows. Isomerase that catalyzes the conversion of deoxy-ribose 1-phosphate (dRib-1-P) and ribose 1-phosphate (Rib-1-P) to deoxy-ribose 5-phosphate (dRib-5-P) and ribose 5-phosphate (Rib-5-P), respectively. The protein is Phosphopentomutase of Lactococcus lactis subsp. cremoris (strain SK11).